The primary structure comprises 367 residues: MKTRFPSPFFILYRRLTVAISFGKVLGWGCLGRILSWMFSCIASFRRKLFCSAPYRASSTVISVGNIVLGGSGKTPTVLWLAENLRARGYSCAVLSRGYKGKCSRQRKLIVVDPKMHSAAYVGDEPLLMAGKLQDGAVFVHKDRRVSAKHAAKNFDILILDDGFQNTKLHKDVEIVVVNGQDPLGGAEFFPRGRLRDFPNRLKEADFIIVNGSCCLENQKLLNTWSSSPKIFVEPCISQVLWEPSGEQLPLDSLSGLAAGVFCGLGFPQGFLDMLKRAGVKILGTYLLPDHAGITKKELHYFSSKIALRQGRGILCTEKDGVKLGNLVHEQGILPVGKVQMRFDFANHEDSGVSLLNRIDQIHNGKR.

V68–T75 is an ATP binding site.

Belongs to the LpxK family.

It catalyses the reaction a lipid A disaccharide + ATP = a lipid IVA + ADP + H(+). It functions in the pathway glycolipid biosynthesis; lipid IV(A) biosynthesis; lipid IV(A) from (3R)-3-hydroxytetradecanoyl-[acyl-carrier-protein] and UDP-N-acetyl-alpha-D-glucosamine: step 6/6. Transfers the gamma-phosphate of ATP to the 4'-position of a tetraacyldisaccharide 1-phosphate intermediate (termed DS-1-P) to form tetraacyldisaccharide 1,4'-bis-phosphate (lipid IVA). This is Tetraacyldisaccharide 4'-kinase from Chlamydia caviae (strain ATCC VR-813 / DSM 19441 / 03DC25 / GPIC) (Chlamydophila caviae).